Reading from the N-terminus, the 88-residue chain is LYR motif-containing protein 2 (88 aa).

Residues 1–19 (MAASRLPPATLTLKQFVRR) constitute a mitochondrion transit peptide.

This sequence belongs to the complex I LYR family.

It is found in the mitochondrion. Functionally, involved in efficient integration of the N-module into mitochondrial respiratory chain complex I. This is LYR motif-containing protein 2 (LYRM2) from Homo sapiens (Human).